The following is a 73-amino-acid chain: Disintegrin cerastin (73 aa).

Positions 1 to 73 (EAGEECDCGT…ADCPRNGLYG (73 aa)) constitute a Disintegrin domain. Cystine bridges form between Cys-6–Cys-21, Cys-8–Cys-16, Cys-15–Cys-38, Cys-29–Cys-35, Cys-34–Cys-59, and Cys-47–Cys-66. The Cell attachment site motif lies at 51–53 (RGD).

Belongs to the venom metalloproteinase (M12B) family. P-II subfamily. P-IIa sub-subfamily. In terms of assembly, monomer (disintegrin). As to expression, expressed by the venom gland.

Its subcellular location is the secreted. Functionally, inhibits fibrinogen interaction with platelets. Acts by binding to alpha-IIb/beta-3 (ITGA2B/ITGB3) on the platelet surface and inhibits aggregation induced by ADP, thrombin, platelet-activating factor and collagen. The sequence is that of Disintegrin cerastin from Crotalus cerastes cerastes (Mojave desert sidewinder).